A 338-amino-acid chain; its full sequence is Hydroxyproline O-galactosyltransferase HPGT1 (338 aa).

Over 1-12 (MARKGSSIRLSS) the chain is Cytoplasmic. A helical; Signal-anchor for type II membrane protein transmembrane segment spans residues 13–32 (SRISTLLLFMFATFASFYVA). The Lumenal portion of the chain corresponds to 33–338 (GRLWQESQTR…WSSEAICAGV (306 aa)).

The protein belongs to the glycosyltransferase 31 family. It depends on Mn(2+) as a cofactor. In terms of tissue distribution, expressed in roots, rosette leaves, cauline leaves, stems, flowers and siliques.

The protein resides in the golgi apparatus membrane. Its pathway is protein modification; protein glycosylation. Its function is as follows. Possesses hydroxyproline O-galactosyltransferase activity. Transfers galactose from UDP-galactose to hydroxyproline residues in the arabinogalactan proteins (AGPs). Is specific for AGPs containing non-contiguous peptidyl hydroxyproline residues. The addition of galactose onto the peptidyl hydroxyproline residues in AGP core proteins represents the first committed step in arabinogalactan polysaccharide addition. AGP glycans play essential roles in both vegetative and reproductive plant growth. This Arabidopsis thaliana (Mouse-ear cress) protein is Hydroxyproline O-galactosyltransferase HPGT1.